Here is an 80-residue protein sequence, read N- to C-terminus: Myocilin opposite strand protein (80 aa).

A disordered region spans residues 53 to 80 (EQAPPPHRTYLTVPPAPPPSPAEDPTVS).

In Homo sapiens (Human), this protein is Myocilin opposite strand protein.